The sequence spans 274 residues: tRNA-cytidine(32) 2-sulfurtransferase (274 aa).

Residues 40 to 45 (SGGKDS) carry the PP-loop motif motif. Residues Cys115, Cys118, and Cys206 each coordinate [4Fe-4S] cluster.

It belongs to the TtcA family. As to quaternary structure, homodimer. Requires Mg(2+) as cofactor. [4Fe-4S] cluster serves as cofactor.

It localises to the cytoplasm. The catalysed reaction is cytidine(32) in tRNA + S-sulfanyl-L-cysteinyl-[cysteine desulfurase] + AH2 + ATP = 2-thiocytidine(32) in tRNA + L-cysteinyl-[cysteine desulfurase] + A + AMP + diphosphate + H(+). It participates in tRNA modification. Functionally, catalyzes the ATP-dependent 2-thiolation of cytidine in position 32 of tRNA, to form 2-thiocytidine (s(2)C32). The sulfur atoms are provided by the cysteine/cysteine desulfurase (IscS) system. The polypeptide is tRNA-cytidine(32) 2-sulfurtransferase (Pseudomonas fluorescens (strain ATCC BAA-477 / NRRL B-23932 / Pf-5)).